A 318-amino-acid polypeptide reads, in one-letter code: dTDP-6-deoxy-L-talose 4-dehydrogenase (NAD(P)(+)) (318 aa).

Residues 19 to 20 (FI), 60 to 61 (DP), Asn95, Thr120, Tyr145, and Lys149 each bind NAD(+). Residues Thr120 and Tyr145 each coordinate substrate. The active-site Proton acceptor is Tyr145.

The protein belongs to the NAD(P)-dependent epimerase/dehydratase family.

The catalysed reaction is dTDP-6-deoxy-beta-L-talose + NAD(+) = dTDP-4-dehydro-beta-L-rhamnose + NADH + H(+). The enzyme catalyses dTDP-6-deoxy-beta-L-talose + NADP(+) = dTDP-4-dehydro-beta-L-rhamnose + NADPH + H(+). Its function is as follows. Catalyzes the reduction of dTDP-6-deoxy-L-lyxo-4-hexulose to dTDP-6-deoxy-L-talose. Can use NAD(+) or NADP(+). The chain is dTDP-6-deoxy-L-talose 4-dehydrogenase (NAD(P)(+)) (tal) from Kitasatospora kifunensis (Streptomyces kifunensis).